The chain runs to 339 residues: Protein H339R (339 aa).

The protein belongs to the asfivirus H339R family. In terms of assembly, interacts with NACA (alpha chain of nascent polypeptide-associated complex).

Its subcellular location is the host cytoplasm. It is found in the host nucleus. The protein localises to the virion. In African swine fever virus (strain Badajoz 1971 Vero-adapted) (Ba71V), this protein is Protein H339R.